The primary structure comprises 99 residues: Large ribosomal subunit protein uL23 (99 aa).

It belongs to the universal ribosomal protein uL23 family. Part of the 50S ribosomal subunit. Contacts protein L29, and trigger factor when it is bound to the ribosome.

In terms of biological role, one of the early assembly proteins it binds 23S rRNA. One of the proteins that surrounds the polypeptide exit tunnel on the outside of the ribosome. Forms the main docking site for trigger factor binding to the ribosome. In Pseudomonas entomophila (strain L48), this protein is Large ribosomal subunit protein uL23.